The sequence spans 860 residues: Leucine--tRNA ligase (860 aa).

The short motif at 42–52 (PYPSGRLHMGH) is the 'HIGH' region element. The 'KMSKS' region motif lies at 619 to 623 (KMSKS). Lys622 serves as a coordination point for ATP.

This sequence belongs to the class-I aminoacyl-tRNA synthetase family.

The protein resides in the cytoplasm. The catalysed reaction is tRNA(Leu) + L-leucine + ATP = L-leucyl-tRNA(Leu) + AMP + diphosphate. The chain is Leucine--tRNA ligase from Citrobacter koseri (strain ATCC BAA-895 / CDC 4225-83 / SGSC4696).